The following is a 262-amino-acid chain: Tryptophan synthase alpha chain (262 aa).

Active-site proton acceptor residues include Glu-48 and Asp-59.

The protein belongs to the TrpA family. As to quaternary structure, tetramer of two alpha and two beta chains.

The catalysed reaction is (1S,2R)-1-C-(indol-3-yl)glycerol 3-phosphate + L-serine = D-glyceraldehyde 3-phosphate + L-tryptophan + H2O. It functions in the pathway amino-acid biosynthesis; L-tryptophan biosynthesis; L-tryptophan from chorismate: step 5/5. Its function is as follows. The alpha subunit is responsible for the aldol cleavage of indoleglycerol phosphate to indole and glyceraldehyde 3-phosphate. The polypeptide is Tryptophan synthase alpha chain (Helicobacter pylori (strain J99 / ATCC 700824) (Campylobacter pylori J99)).